The primary structure comprises 412 residues: Serine hydroxymethyltransferase (412 aa).

Residues Leu117 and 121-123 (GHL) contribute to the (6S)-5,6,7,8-tetrahydrofolate site. Lys226 is subject to N6-(pyridoxal phosphate)lysine. Position 241 (Glu241) interacts with (6S)-5,6,7,8-tetrahydrofolate.

This sequence belongs to the SHMT family. In terms of assembly, homodimer. Requires pyridoxal 5'-phosphate as cofactor.

The protein resides in the cytoplasm. The enzyme catalyses (6R)-5,10-methylene-5,6,7,8-tetrahydrofolate + glycine + H2O = (6S)-5,6,7,8-tetrahydrofolate + L-serine. The protein operates within one-carbon metabolism; tetrahydrofolate interconversion. Its pathway is amino-acid biosynthesis; glycine biosynthesis; glycine from L-serine: step 1/1. Its function is as follows. Catalyzes the reversible interconversion of serine and glycine with tetrahydrofolate (THF) serving as the one-carbon carrier. This reaction serves as the major source of one-carbon groups required for the biosynthesis of purines, thymidylate, methionine, and other important biomolecules. Also exhibits THF-independent aldolase activity toward beta-hydroxyamino acids, producing glycine and aldehydes, via a retro-aldol mechanism. The polypeptide is Serine hydroxymethyltransferase (Staphylococcus carnosus (strain TM300)).